The following is a 432-amino-acid chain: Adenylosuccinate synthetase (432 aa).

GTP-binding positions include 13-19 and 41-43; these read GDEGKGK and GHT. Residue Asp14 is the Proton acceptor of the active site. Mg(2+) contacts are provided by Asp14 and Gly41. IMP is bound by residues 14 to 17, 39 to 42, Thr130, Arg144, Gln225, Thr240, and Arg304; these read DEGK and NAGH. His42 functions as the Proton donor in the catalytic mechanism. 300–306 is a binding site for substrate; sequence AVTGRPR. GTP contacts are provided by residues Arg306, 332–334, and 415–417; these read KLD and STG.

Belongs to the adenylosuccinate synthetase family. In terms of assembly, homodimer. Requires Mg(2+) as cofactor.

The protein localises to the cytoplasm. It carries out the reaction IMP + L-aspartate + GTP = N(6)-(1,2-dicarboxyethyl)-AMP + GDP + phosphate + 2 H(+). It participates in purine metabolism; AMP biosynthesis via de novo pathway; AMP from IMP: step 1/2. Functionally, plays an important role in the de novo pathway of purine nucleotide biosynthesis. Catalyzes the first committed step in the biosynthesis of AMP from IMP. The chain is Adenylosuccinate synthetase from Haemophilus influenzae (strain PittEE).